The sequence spans 824 residues: Leucine--tRNA ligase (824 aa).

The 'HIGH' region signature appears at 42–52 (PYPSGKIHMGH). A 'KMSKS' region motif is present at residues 581 to 585 (KMSKS). K584 lines the ATP pocket.

Belongs to the class-I aminoacyl-tRNA synthetase family.

The protein localises to the cytoplasm. The enzyme catalyses tRNA(Leu) + L-leucine + ATP = L-leucyl-tRNA(Leu) + AMP + diphosphate. The protein is Leucine--tRNA ligase of Citrifermentans bemidjiense (strain ATCC BAA-1014 / DSM 16622 / JCM 12645 / Bem) (Geobacter bemidjiensis).